A 433-amino-acid chain; its full sequence is ATP-dependent RNA helicase SUB2 (433 aa).

Residues 49–77 carry the Q motif motif; that stretch reads TGFRDFLLKPELLRAIGDCGFEHPSEVQQ. The region spanning 80 to 255 is the Helicase ATP-binding domain; it reads IPQSILGTDV…KKFMQNPLEI (176 aa). 93-100 provides a ligand contact to ATP; it reads AKSGLGKT. The DEAD box motif lies at 202-205; sequence DECD. The 162-residue stretch at 267 to 428 folds into the Helicase C-terminal domain; it reads GLQQYYIKLE…EFPEEGVDPS (162 aa).

Belongs to the DEAD box helicase family. DECD subfamily.

It is found in the nucleus. The enzyme catalyses ATP + H2O = ADP + phosphate + H(+). ATP-binding RNA helicase involved in transcription elongation and required for the export of mRNA out of the nucleus. SUB2 also plays a role in pre-mRNA splicing and spliceosome assembly. May be involved in rDNA and telomeric silencing, and maintenance of genome integrity. The protein is ATP-dependent RNA helicase SUB2 (SUB2) of Scheffersomyces stipitis (strain ATCC 58785 / CBS 6054 / NBRC 10063 / NRRL Y-11545) (Yeast).